Consider the following 270-residue polypeptide: tRNA pseudouridine synthase A (270 aa).

Catalysis depends on Asp60, which acts as the Nucleophile. The RNA binding stretch occupies residues Phe107–Phe111. Tyr118 contributes to the substrate binding site. Residues Gln168–Arg172 form an interaction with tRNA region.

It belongs to the tRNA pseudouridine synthase TruA family. In terms of assembly, homodimer.

The catalysed reaction is uridine(38/39/40) in tRNA = pseudouridine(38/39/40) in tRNA. Formation of pseudouridine at positions 38, 39 and 40 in the anticodon stem and loop of transfer RNAs. The chain is tRNA pseudouridine synthase A from Escherichia coli O9:H4 (strain HS).